The following is a 153-amino-acid chain: 3-hydroxyacyl-[acyl-carrier-protein] dehydratase FabZ (153 aa).

H54 is an active-site residue.

It belongs to the thioester dehydratase family. FabZ subfamily.

The protein localises to the cytoplasm. It carries out the reaction a (3R)-hydroxyacyl-[ACP] = a (2E)-enoyl-[ACP] + H2O. Its function is as follows. Involved in unsaturated fatty acids biosynthesis. Catalyzes the dehydration of short chain beta-hydroxyacyl-ACPs and long chain saturated and unsaturated beta-hydroxyacyl-ACPs. In Shewanella loihica (strain ATCC BAA-1088 / PV-4), this protein is 3-hydroxyacyl-[acyl-carrier-protein] dehydratase FabZ.